A 505-amino-acid chain; its full sequence is Maturase K (505 aa).

It belongs to the intron maturase 2 family. MatK subfamily.

The protein localises to the plastid. Its subcellular location is the chloroplast. Usually encoded in the trnK tRNA gene intron. Probably assists in splicing its own and other chloroplast group II introns. In Illicium oligandrum (Star anise), this protein is Maturase K.